We begin with the raw amino-acid sequence, 197 residues long: Rac-like GTP-binding protein 6 (197 aa).

GTP is bound at residue 13 to 20 (GDGAVGKT). The Effector region motif lies at 35 to 43 (YVPTVFDNF). GTP contacts are provided by residues 60–64 (DTAGQ) and 118–121 (TKLD). C194 bears the Cysteine methyl ester mark. C194 is lipidated: S-geranylgeranyl cysteine. Residues 195 to 197 (SIL) constitute a propeptide, removed in mature form.

The protein belongs to the small GTPase superfamily. Rho family.

Its subcellular location is the cytoplasm. It localises to the membrane. Inactive GDP-bound Rho GTPases reside in the cytosol, are found in a complex with Rho GDP-dissociation inhibitors (Rho GDIs), and are released from the GDI protein in order to translocate to membranes upon activation. The protein is Rac-like GTP-binding protein 6 (RAC6) of Oryza sativa subsp. japonica (Rice).